The following is a 121-amino-acid chain: Large ribosomal subunit protein bL12 (121 aa).

Belongs to the bacterial ribosomal protein bL12 family. In terms of assembly, homodimer. Part of the ribosomal stalk of the 50S ribosomal subunit. Forms a multimeric L10(L12)X complex, where L10 forms an elongated spine to which 2 to 4 L12 dimers bind in a sequential fashion. Binds GTP-bound translation factors.

Its function is as follows. Forms part of the ribosomal stalk which helps the ribosome interact with GTP-bound translation factors. Is thus essential for accurate translation. The polypeptide is Large ribosomal subunit protein bL12 (Shewanella frigidimarina (strain NCIMB 400)).